The following is a 123-amino-acid chain: Histone H2B (123 aa).

Residues 1–30 (MPPKTSGKAAKKAGKAQKNITKTDKKKKRK) form a disordered region. N-methylproline; partial is present on Pro-2. Lys-44 bears the N6-succinyllysine mark. O-linked (GlcNAc) serine glycosylation occurs at Ser-110. Residues Lys-114 and Lys-118 each carry the N6-succinyllysine modification. A Glycyl lysine isopeptide (Lys-Gly) (interchain with G-Cter in ubiquitin) cross-link involves residue Lys-118.

Belongs to the histone H2B family. The nucleosome is a histone octamer containing two molecules each of H2A, H2B, H3 and H4 assembled in one H3-H4 heterotetramer and two H2A-H2B heterodimers. The octamer wraps approximately 147 bp of DNA. Post-translationally, phosphorylated by the catalytic component of the Dbf4-dependent kinase (DDK) complex Cdc7. In terms of processing, monoubiquitination of Lys-118 by Bre1 gives a specific tag for epigenetic transcriptional activation and is also prerequisite for histone H3 'Lys-4' and 'Lys-79' methylation. Deubiquitination of Lys-118 by the SAGA complex is involved in activating transcription of a large subset of genes. Methylation at Pro-2 increases upon heat shock. Post-translationally, glcNAcylation at Ser-110 promotes monoubiquitination of Lys-118. It fluctuates in response to extracellular glucose, and associates with transcribed genes.

Its subcellular location is the nucleus. It localises to the chromosome. Functionally, core component of nucleosome. Nucleosomes wrap and compact DNA into chromatin, limiting DNA accessibility to the cellular machineries which require DNA as a template. Histones thereby play a central role in transcription regulation, DNA repair, DNA replication and chromosomal stability. DNA accessibility is regulated via a complex set of post-translational modifications of histones, also called histone code, and nucleosome remodeling. This chain is Histone H2B (His2B), found in Drosophila erecta (Fruit fly).